The primary structure comprises 591 residues: CTP synthase 1-B (591 aa).

Residues 300-554 form the Glutamine amidotransferase type-1 domain; the sequence is SIALVGKYTK…LASVGRLSQY (255 aa). Residues Cys-399, His-526, and Glu-528 each act as for GATase activity in the active site. Basic and acidic residues predominate over residues 562-572; the sequence is SPRDTYSDRSE. Residues 562-581 are disordered; it reads SPRDTYSDRSENSSPDAEIA.

Belongs to the CTP synthase family.

The catalysed reaction is UTP + L-glutamine + ATP + H2O = CTP + L-glutamate + ADP + phosphate + 2 H(+). It participates in pyrimidine metabolism; CTP biosynthesis via de novo pathway; CTP from UDP: step 2/2. In terms of biological role, this enzyme is involved in the de novo synthesis of CTP, a precursor of DNA, RNA and phospholipids. Catalyzes the ATP-dependent amination of UTP to CTP with either L-glutamine or ammonia as a source of nitrogen. In Xenopus laevis (African clawed frog), this protein is CTP synthase 1-B (ctps1-b).